Consider the following 982-residue polypeptide: Protein lin-10 (982 aa).

Polar residues predominate over residues 1-16; the sequence is MSSEAVAQATAATTSP. 5 disordered regions span residues 1–55, 119–228, 269–327, 432–511, and 525–593; these read MSSE…MIPP, QPAL…RTDS, TVAD…STVP, FAQQ…GTDD, and QREQ…SKET. Over residues 33-44 the composition is skewed to gly residues; sequence KGGGAGGGGGGE. The span at 119-134 shows a compositional bias: low complexity; sequence QPALQQPRPSSQASSS. Polar residues-rich tracts occupy residues 143–156 and 169–190; these read RQTA…NVSP and ETSG…SSDV. The segment covering 211–228 has biased composition (basic and acidic residues); sequence GEEKSEEKRKLSGDRTDS. Positions 301–318 are enriched in polar residues; that stretch reads SLNQLRSSFNLPDDSTTV. 2 stretches are compositionally biased toward low complexity: residues 432 to 445 and 454 to 464; these read FAQQ…APTP and PSTSSGPSGAL. The span at 490–501 shows a compositional bias: polar residues; the sequence is NGTSTSTTNGAQ. Residues 539 to 550 show a composition bias toward low complexity; the sequence is QEAATAAQEAAE. Residues 577-593 show a composition bias toward basic and acidic residues; the sequence is GAERRGSVDKKKNSKET. The PID domain occupies 604–788; sequence GVLFRARYLG…VLNSQELLGD (185 aa). PDZ domains are found at residues 801 to 886 and 892 to 968; these read EVVV…TVVS and EVRI…MPTS.

Interacts (via N-terminus) with egl-9 isoform e (via catalytic domain); the interaction regulates its trafficking; the interaction is direct. Interacts with rab-6.2 (in GTP-bound form). Phosphorylated on multiple Ser and Thr residues by cdk-5 which regulates its localization. In terms of processing, may be hydroxylated by egl-9 isoform e on multiple Pro residues which may prevent phosphorylation by cdk-5. In terms of tissue distribution, expressed in vulval epithelial cells and neurons.

The protein localises to the golgi apparatus. Its subcellular location is the golgi stack membrane. It localises to the trans-Golgi network membrane. The protein resides in the cytoplasm. It is found in the synapse. The protein localises to the perikaryon. Functionally, required specifically for the determination of 3 vulval precursor cell fates P5.p, P6.p and P7.p during late second and early third larval stages; required for basolateral localization of receptor tyrosine kinase let-23. Could have a general but redundant role in development, functioning in diverse cell lineages to control cell fates. Regulates the trafficking of the glr-1 subunit of AMPA-type glutamate receptors (AMPRs) in the ventral nerve cord. This may be partly through interacting with the small GTPase rab-6.2 in its active GTP-bound state. This is Protein lin-10 from Caenorhabditis elegans.